The sequence spans 130 residues: Protein ApaG (130 aa).

The ApaG domain maps to 3-127; sequence KAETRGITVT…FSLDSPHLRR (125 aa).

The protein is Protein ApaG of Methylorubrum populi (strain ATCC BAA-705 / NCIMB 13946 / BJ001) (Methylobacterium populi).